A 143-amino-acid polypeptide reads, in one-letter code: Actin-depolymerizing factor 2 (143 aa).

Residues 5-139 (ASGMAVHDDC…GLDVFRSRAG (135 aa)) form the ADF-H domain.

It belongs to the actin-binding proteins ADF family.

Actin-depolymerizing protein. Severs actin filaments (F-actin) and binds to actin monomers. The sequence is that of Actin-depolymerizing factor 2 (ADF2) from Petunia hybrida (Petunia).